The primary structure comprises 724 residues: Probable ATP-dependent RNA helicase DDX4 (724 aa).

Residues 1-11 (MSGQEDWESEI) are compositionally biased toward acidic residues. Disordered stretches follow at residues 1 to 25 (MSGQEDWESEIDNPPACVPNLSNSE) and 37 to 241 (SSNN…QGPR). Over residues 108–130 (SNGKQESGDFTNDDNRTIDDNRR) the composition is skewed to basic and acidic residues. Positions 168-182 (EQSGFTSNDGFNNET) are enriched in polar residues. Residues 286-314 (LTFEEANLCDSLAKNVCKSGYVKLTPIQK) carry the Q motif motif. One can recognise a Helicase ATP-binding domain in the interval 317–500 (IPIIVAGRDL…REILKPDYLF (184 aa)). ATP is bound at residue 330–337 (AQTGSGKT). Positions 444–447 (DEAD) match the DEAD box motif. Residues 512–675 (DVEQMVIEVD…EVPAWLEEVA (164 aa)) form the Helicase C-terminal domain. A compositionally biased stretch (polar residues) spans 683–692 (AYNPRSNKFA). The interval 683 to 724 (AYNPRSNKFASTDDRKRGDSRGDYSTSGFSPSAAQAEEEDWG) is disordered. Residues 693–704 (STDDRKRGDSRG) are compositionally biased toward basic and acidic residues. Over residues 705–715 (DYSTSGFSPSA) the composition is skewed to polar residues.

This sequence belongs to the DEAD box helicase family. DDX4/VASA subfamily.

It localises to the cytoplasm. The enzyme catalyses ATP + H2O = ADP + phosphate + H(+). Its function is as follows. Probable ATP-dependent RNA helicase required during spermatogenesis to repress transposable elements and preventing their mobilization, which is essential for the germline integrity. Acts via the piRNA metabolic process, which mediates the repression of transposable elements during meiosis by forming complexes composed of piRNAs and Piwi proteins and governs the methylation and subsequent repression of transposons. Involved in the secondary piRNAs metabolic process, the production of piRNAs in fetal male germ cells through a ping-pong amplification cycle. In Pelophylax lessonae (Pool frog), this protein is Probable ATP-dependent RNA helicase DDX4.